Reading from the N-terminus, the 259-residue chain is Protein unc-50 homolog (259 aa).

Polar residues predominate over residues 1 to 15 (MLPTSSPQIHRNGSL). The disordered stretch occupies residues 1 to 22 (MLPTSSPQIHRNGSLSERDAAR). The Cytoplasmic portion of the chain corresponds to 1 to 80 (MLPTSSPQIH…TKDQWARDDP (80 aa)). The helical transmembrane segment at 81–101 (AFLVLLSIWLCVSTVGFGLVL) threads the bilayer. Residues 102-110 (DMGFVETLT) lie on the Lumenal side of the membrane. The helical transmembrane segment at 111-131 (LLLWVVFIDCIGVGLLISTLM) threads the bilayer. Residues 132–162 (WFVTNKYLMKHPNRDYDVEWGYAFDVHLNAF) are Cytoplasmic-facing. A helical membrane pass occupies residues 163 to 183 (YPLLVILHFLQLFFINHVVVI). The Lumenal portion of the chain corresponds to 184 to 198 (SSDWFLGYFVGNTMW). The chain crosses the membrane as a helical span at residues 199–219 (LIAIGYYVYITFLGYSALPFL). The Cytoplasmic portion of the chain corresponds to 220–222 (KNT). Residues 223–243 (VVLLYPFALLGLLYVLSISLG) traverse the membrane as a helical segment. The Lumenal segment spans residues 244-259 (WNFTKGLCWFYKHRVQ).

It belongs to the unc-50 family.

Its subcellular location is the nucleus inner membrane. The protein localises to the golgi apparatus membrane. In terms of biological role, involved in the cell surface expression of neuronal nicotinic receptors. Binds RNA. The polypeptide is Protein unc-50 homolog (unc50) (Danio rerio (Zebrafish)).